Here is a 211-residue protein sequence, read N- to C-terminus: Stromal cell-derived factor 2 (211 aa).

The N-terminal stretch at 1-18 (MAVVSLLLFGGLWSAVGS) is a signal peptide. MIR domains lie at 21 to 75 (LAVV…IRGK), 83 to 138 (GTPI…VLCN), and 139 to 193 (GPYW…AMEG).

Its subcellular location is the secreted. This is Stromal cell-derived factor 2 (SDF2) from Bos taurus (Bovine).